Reading from the N-terminus, the 347-residue chain is Magnesium-chelatase subunit ChlI (347 aa).

41-48 (DRGTGKST) is a binding site for ATP.

This sequence belongs to the Mg-chelatase subunits D/I family.

Its subcellular location is the plastid. The protein localises to the cyanelle. It catalyses the reaction protoporphyrin IX + Mg(2+) + ATP + H2O = Mg-protoporphyrin IX + ADP + phosphate + 3 H(+). It participates in porphyrin-containing compound metabolism; chlorophyll biosynthesis. Its function is as follows. Involved in chlorophyll biosynthesis; introduces a magnesium ion into protoporphyrin IX to yield Mg-protoporphyrin IX. In Cyanophora paradoxa, this protein is Magnesium-chelatase subunit ChlI (chlI).